The sequence spans 130 residues: Protein ApaG (130 aa).

Residues 3–127 (RAVTRGIEVS…FSLDIPEQRR (125 aa)) form the ApaG domain.

The chain is Protein ApaG from Brucella anthropi (strain ATCC 49188 / DSM 6882 / CCUG 24695 / JCM 21032 / LMG 3331 / NBRC 15819 / NCTC 12168 / Alc 37) (Ochrobactrum anthropi).